A 263-amino-acid chain; its full sequence is UPF0246 protein Mmar10_0828 (263 aa).

It belongs to the UPF0246 family.

The chain is UPF0246 protein Mmar10_0828 from Maricaulis maris (strain MCS10) (Caulobacter maris).